The primary structure comprises 111 residues: Large ribosomal subunit protein uL22 (111 aa).

Belongs to the universal ribosomal protein uL22 family. In terms of assembly, part of the 50S ribosomal subunit.

Its function is as follows. This protein binds specifically to 23S rRNA; its binding is stimulated by other ribosomal proteins, e.g. L4, L17, and L20. It is important during the early stages of 50S assembly. It makes multiple contacts with different domains of the 23S rRNA in the assembled 50S subunit and ribosome. The globular domain of the protein is located near the polypeptide exit tunnel on the outside of the subunit, while an extended beta-hairpin is found that lines the wall of the exit tunnel in the center of the 70S ribosome. The protein is Large ribosomal subunit protein uL22 of Chlamydia trachomatis serovar L2 (strain ATCC VR-902B / DSM 19102 / 434/Bu).